Reading from the N-terminus, the 493-residue chain is GPI alpha-1,6-mannosyltransferase 2 (493 aa).

Topologically, residues 1 to 13 (MWPQDPSRKEVLR) are cytoplasmic. Residues 14–34 (FAVSCRILTLMLQALFNAIIP) traverse the membrane as a helical segment. The Lumenal portion of the chain corresponds to 35–77 (DHHAEAFSPPRLAPSGFVDQLVEGLLGGLSHWDAEHFLFIAEH). The chain crosses the membrane as a helical span at residues 78-98 (GYLYEHNFAFFPGFPLALLVG). The Cytoplasmic segment spans residues 99-113 (TELLRPLRGLLSLRS). The chain crosses the membrane as a helical span at residues 114 to 134 (CLLISVASLNFLFFMLAAVAL). The Lumenal segment spans residues 135 to 136 (HD). The helical transmembrane segment at 137–157 (LGCLVLHCPHQSFYAALLFCL) threads the bilayer. Topologically, residues 158-161 (SPAN) are cytoplasmic. The chain crosses the membrane as a helical span at residues 162–182 (VFLAAGYSEALFALLTFSAMG). The Lumenal portion of the chain corresponds to 183–192 (QLERGRVWTS). Residues 193–213 (VLLFAFATGVRSNGLVSVGFL) traverse the membrane as a helical segment. Over 214 to 234 (MHSQCQGFFSSLTMLNPLRQL) the chain is Cytoplasmic. The chain crosses the membrane as a helical span at residues 235-255 (FKLMASLFLSVFTLGLPFALF). Residues 256-327 (QYYAYTQFCL…KYYELKQVPN (72 aa)) lie on the Lumenal side of the membrane. Residues 328 to 348 (FLLAAPVAILVAWATWTYVTT) traverse the membrane as a helical segment. Topologically, residues 349-378 (HPWLCLTLGLQRSKNNKTLEKPDLGFLSPQ) are cytoplasmic. A helical transmembrane segment spans residues 379-399 (VFVYVVHAAVLLLFGGLCMHV). At 400–469 (QVLTRFLGSS…HWKTCSPVTR (70 aa)) the chain is on the lumenal side. Residues 470–490 (YILGYFLTYWLLGLLLHCNFL) traverse the membrane as a helical segment. Residues 491 to 493 (PWT) are Cytoplasmic-facing.

Belongs to the PIGV family. Not N-glycosylated.

The protein resides in the endoplasmic reticulum membrane. The protein operates within glycolipid biosynthesis; glycosylphosphatidylinositol-anchor biosynthesis. In terms of biological role, alpha-1,6-mannosyltransferase that catalyzes the transfer of the second mannose, via an alpha-1,6 bond, from a dolichol-phosphate-mannose (Dol-P-Man) to the alpha-D-Man-(1-&gt;4)-alpha-D-GlcN-(1-&gt;6)-(1-radyl,2-acyl-sn-glycero-3-phospho)-2-acyl-inositol (also termed H2) intermediate to generate an alpha-D-Man-(1-&gt;6)-alpha-D-Man-(1-&gt;4)-alpha-D-GlcN-(1-&gt;6)-(1-radyl,2-acyl-sn-glycero-3-phospho)-2-acyl-inositol (also termed H3) and participates in the seventh step of the glycosylphosphatidylinositol-anchor biosynthesis. Also transfers the second mannose on a 2-PEtn-alpha-D-Man-(1-&gt;4)-alpha-D-GlcN-(1-&gt;6)-(1-radyl,2-acyl-sn-glycero-3-phospho)-2-acyl-inositol (also termed H5). In Homo sapiens (Human), this protein is GPI alpha-1,6-mannosyltransferase 2.